Reading from the N-terminus, the 336-residue chain is Serpentine receptor class beta-15 (336 aa).

7 consecutive transmembrane segments (helical) span residues 24–44, 57–77, 109–129, 142–162, 186–206, 237–257, and 276–296; these read LFIH…FVIF, FLFS…AIIS, IFMS…FIAM, LGPI…FFIY, FTFF…NSYL, VFVV…IMIL, and GAFT…AVYL.

This sequence belongs to the nematode receptor-like protein srb family.

Its subcellular location is the membrane. In Caenorhabditis elegans, this protein is Serpentine receptor class beta-15 (srb-15).